Consider the following 291-residue polypeptide: Verruculogen synthase (291 aa).

Tyr68 is an active-site residue.

Belongs to the PhyH family. As to quaternary structure, homodimer. Fe cation is required as a cofactor.

It catalyses the reaction fumitremorgin B + 2-oxoglutarate + AH2 + 2 O2 = verruculogen + succinate + A + CO2 + H2O. It participates in mycotoxin biosynthesis. Functionally, verruculogen synthase; part of the gene cluster that mediates the biosynthesis of fumitremorgins, indole alkaloids that carry not only intriguing chemical structures, but also interesting biological and pharmacological activities. The biosynthesis of fumitremorgin-type alkaloids begins by condensation of the two amino acids L-tryptophan and L-proline to brevianamide F, catalyzed by the non-ribosomal peptide synthetase ftmA. Brevianamide F is then prenylated by the prenyltransferase ftmPT1/ftmB in the presence of dimethylallyl diphosphate, resulting in the formation of tryprostatin B. The three cytochrome P450 monooxygenases, ftmP450-1/ftmC, ftmP450-2/ftmE and ftmP450-3/FtmG, are responsible for the conversion of tryprostatin B to 6-hydroxytryprostatin B, tryprostatin A to fumitremorgin C and fumitremorgin C to 12,13-dihydroxyfumitremorgin C, respectively. The putative methyltransferase ftmMT/ftmD is expected for the conversion of 6-hydroxytryprostatin B to tryprostatin A. FtmPT2/FtmH catalyzes the prenylation of 12,13-dihydroxyfumitre-morgin C in the presence of dimethylallyl diphosphate, resulting in the formation of fumitremorgin B. Fumitremorgin B is further converted to verruculogen by ftmOx1/ftmF via the insertion of an endoperoxide bond between the two prenyl moieties. In some fungal species, verruculogen is further converted to fumitremorgin A, but the enzymes involved in this step have not been identified yet. In Aspergillus fumigatus (Neosartorya fumigata), this protein is Verruculogen synthase.